Here is a 588-residue protein sequence, read N- to C-terminus: Adenine deaminase (588 aa).

Belongs to the metallo-dependent hydrolases superfamily. Adenine deaminase family. As to quaternary structure, homodimer. It depends on Mn(2+) as a cofactor.

The enzyme catalyses adenine + H2O + H(+) = hypoxanthine + NH4(+). The sequence is that of Adenine deaminase from Escherichia coli O17:K52:H18 (strain UMN026 / ExPEC).